A 196-amino-acid chain; its full sequence is Pyridoxal 5'-phosphate synthase subunit PdxT (196 aa).

46-48 (GES) is a binding site for L-glutamine. The active-site Nucleophile is the Cys78. L-glutamine contacts are provided by residues Arg105 and 133–134 (IR). Catalysis depends on charge relay system residues His169 and Glu171.

The protein belongs to the glutaminase PdxT/SNO family. In the presence of PdxS, forms a dodecamer of heterodimers. Only shows activity in the heterodimer.

It catalyses the reaction aldehydo-D-ribose 5-phosphate + D-glyceraldehyde 3-phosphate + L-glutamine = pyridoxal 5'-phosphate + L-glutamate + phosphate + 3 H2O + H(+). The enzyme catalyses L-glutamine + H2O = L-glutamate + NH4(+). Its pathway is cofactor biosynthesis; pyridoxal 5'-phosphate biosynthesis. Its function is as follows. Catalyzes the hydrolysis of glutamine to glutamate and ammonia as part of the biosynthesis of pyridoxal 5'-phosphate. The resulting ammonia molecule is channeled to the active site of PdxS. This chain is Pyridoxal 5'-phosphate synthase subunit PdxT, found in Geobacillus kaustophilus (strain HTA426).